We begin with the raw amino-acid sequence, 108 residues long: Large ribosomal subunit protein P1 (108 aa).

The segment at 67–108 is disordered; sequence PAAAPAEAGGEEKKEEEKKEEEEKEEEVSEEEALAGLSALFG. Positions 84–99 are enriched in acidic residues; sequence KKEEEEKEEEVSEEEA.

This sequence belongs to the eukaryotic ribosomal protein P1/P2 family. As to quaternary structure, part of the 50S ribosomal subunit. Homodimer, it forms part of the ribosomal stalk which helps the ribosome interact with GTP-bound translation factors. Forms a heptameric uL10/P0(P1)2(P1)2(P1)2 complex, where uL10/P0 forms an elongated spine to which the P1 dimers bind in a sequential fashion.

Functionally, forms part of the ribosomal stalk, playing a central role in the interaction of the ribosome with GTP-bound translation factors. The stalk complex of P.horikoshii binds to E.coli large subunits and confers on them the ability to interact with eukaryotic elongation factors. Each succesive P1 dimer bound along the P0 spine increases the GTPase activity of elongation factors and increases translation by reconsituted ribosomes. This chain is Large ribosomal subunit protein P1, found in Pyrococcus horikoshii (strain ATCC 700860 / DSM 12428 / JCM 9974 / NBRC 100139 / OT-3).